A 447-amino-acid polypeptide reads, in one-letter code: Exodeoxyribonuclease 7 large subunit (447 aa).

The protein belongs to the XseA family. Heterooligomer composed of large and small subunits.

The protein localises to the cytoplasm. It carries out the reaction Exonucleolytic cleavage in either 5'- to 3'- or 3'- to 5'-direction to yield nucleoside 5'-phosphates.. Bidirectionally degrades single-stranded DNA into large acid-insoluble oligonucleotides, which are then degraded further into small acid-soluble oligonucleotides. In Pediococcus pentosaceus (strain ATCC 25745 / CCUG 21536 / LMG 10740 / 183-1w), this protein is Exodeoxyribonuclease 7 large subunit.